Consider the following 415-residue polypeptide: ORC1-type DNA replication protein 2 (415 aa).

ATP-binding positions include 69–73, Tyr-215, and Arg-227; that span reads TGKSV.

This sequence belongs to the CDC6/cdc18 family.

Its function is as follows. Involved in regulation of DNA replication. The sequence is that of ORC1-type DNA replication protein 2 (cdc6-2) from Sulfolobus acidocaldarius (strain ATCC 33909 / DSM 639 / JCM 8929 / NBRC 15157 / NCIMB 11770).